We begin with the raw amino-acid sequence, 404 residues long: Agnestins biosynthesis cluster transcription factor AgnL10 (404 aa).

Positions 23–50 (CNRCAVSKIKCSKEKPACARCAKQDKVC) form a DNA-binding region, zn(2)-C6 fungal-type. Disordered stretches follow at residues 54–83 (ATKRAGRKRGSRRHNNPVPSPTTQDLPTAA), 188–209 (ASASSMDPAAGPQRPPDEPSSG), and 294–318 (PGPDGDGVSWDNSTPPPGEQGAGVD). The segment covering 57 to 68 (RAGRKRGSRRHN) has biased composition (basic residues). The span at 74–83 (PTTQDLPTAA) shows a compositional bias: polar residues. Residues 188–197 (ASASSMDPAA) show a composition bias toward low complexity.

Its subcellular location is the nucleus. Its function is as follows. Transcription factor that regulates the expression of the gene cluster that mediates the biosynthesis of agnestins, dihydroxy-xanthone metabolites. In Paecilomyces divaricatus (Penicillium divaricatum), this protein is Agnestins biosynthesis cluster transcription factor AgnL10.